Here is a 533-residue protein sequence, read N- to C-terminus: Calcitonin receptor (533 aa).

A signal peptide spans 1-41 (MTPRRSRVKRRNLRKPKMRFLLVNRFTLLLLLLVSPTPVLQ). The Extracellular segment spans residues 42–163 (APTNLTDSGL…FTSEKLQNAY (122 aa)). Residues asparagine 45, asparagine 90, asparagine 142, and asparagine 147 are each glycosylated (N-linked (GlcNAc...) asparagine). 3 disulfide bridges follow: cysteine 72/cysteine 98, cysteine 89/cysteine 129, and cysteine 112/cysteine 151. The helical transmembrane segment at 164-186 (VLYYLALVGHSLSIAALVASMLI) threads the bilayer. Residues 187–198 (FWIFKNLSCQRV) are Cytoplasmic-facing. Residues 199–219 (TLHKHMFLTYILNSIIIIIHL) traverse the membrane as a helical segment. Topologically, residues 220-273 (VEVVPNGDLVRRDPMHIFHHNTHMWTMQWELSPPLPLSAHEGKMDPHASEVISC) are extracellular. A disulfide bridge connects residues cysteine 273 and cysteine 343. Residues 274–296 (KVLHFLHQYMMSCNYFWMLCEGI) form a helical membrane-spanning segment. The Cytoplasmic portion of the chain corresponds to 297-313 (YLHTLIVMAVFTDEQRL). Residues 314–334 (RWYYLLGWGFPIVPTIIHAIT) form a helical membrane-spanning segment. At 335–350 (RALYYNDNCWLSAETH) the chain is on the extracellular side. The helical transmembrane segment at 351 to 374 (LLYIIHGPVMVALVVNFFFLLNIV) threads the bilayer. The Cytoplasmic portion of the chain corresponds to 375–394 (RVLVTKMRQTHEAESYMYLK). The chain crosses the membrane as a helical span at residues 395 to 413 (AVKATMVLVPLLGIQFVVF). At 414-421 (PWRPSNKV) the chain is on the extracellular side. A helical transmembrane segment spans residues 422 to 448 (LGKIYDYLMHSLIHFQGFFVATIYCFC). Over 449–533 (NHEVQVTLKR…MNVIQQDASA (85 aa)) the chain is Cytoplasmic.

The protein belongs to the G-protein coupled receptor 2 family. Heterodimer of CALCR and RAMP1, RAMP2 or RAMP3; the receptor complexes function as AMYR1, AMYR2 and AMYR3 receptors, respectively, and respond to amylin/IAPP, calcitonin/CT and CGRP1 ligands. Interacts with GPRASP2.

It localises to the cell membrane. G protein-coupled receptor activated by ligand peptides amylin (IAPP), calcitonin (CT/CALCA) and calcitonin gene-related peptide type 1 (CGRP1/CALCA). CALCR interacts with receptor-activity-modifying proteins RAMP1, 2 and 3 to form receptor complexes AMYR1, 2 and 3, respectively. IAPP, CT and CGRP1 activate CALCR and AMYRs with distinct modes of receptor activation resulting in specific phenotypes. Ligand binding causes a conformation change that triggers signaling via guanine nucleotide-binding proteins (G proteins) and modulates the activity of downstream effectors. Activates cAMP-dependent pathway. The polypeptide is Calcitonin receptor (Mus musculus (Mouse)).